A 607-amino-acid polypeptide reads, in one-letter code: SNW/SKI-interacting protein A (607 aa).

5 disordered regions span residues 29–77 (ERYG…GGAF), 178–205 (AQPK…AAFN), 217–265 (EMAQ…IPPC), 327–434 (LQLK…DRDR), and 516–607 (KVMK…ERGR). Positions 35 to 49 (SAQSDAAAAAAKPSG) are enriched in low complexity. Residues 190 to 353 (SKFIKYKPSQ…QKARMERTGA (164 aa)) are SNW. Over residues 240-251 (PPVPVMHSPPRP) the composition is skewed to pro residues. Coiled-coil stretches lie at residues 313-349 (AREA…ARME) and 391-418 (EREA…LEAR). Basic and acidic residues-rich tracts occupy residues 327 to 339 (LQLK…EQEL), 379 to 434 (EQPR…DRDR), 516 to 527 (KVMKTDRFKPDK), 535 to 550 (RSGK…KQEE), and 562 to 571 (EVKKGKKAVE).

This sequence belongs to the SNW family. Interacts with FLO6/SIP4. Interacts with DIS1. As to expression, widely expressed.

Its subcellular location is the nucleus. In terms of biological role, acts as a positive regulator of drought and salt tolerance. Acts as a positive regulator of cell viability. This Oryza sativa subsp. japonica (Rice) protein is SNW/SKI-interacting protein A.